The following is a 402-amino-acid chain: Arginine deiminase (402 aa).

C392 serves as the catalytic Amidino-cysteine intermediate.

It belongs to the arginine deiminase family.

The protein resides in the cytoplasm. It catalyses the reaction L-arginine + H2O = L-citrulline + NH4(+). It functions in the pathway amino-acid degradation; L-arginine degradation via ADI pathway; carbamoyl phosphate from L-arginine: step 1/2. The protein is Arginine deiminase of Mycobacterium avium (strain 104).